Reading from the N-terminus, the 469-residue chain is Phosphatidylinositol 4-kinase type 2-alpha (469 aa).

Disordered regions lie at residues 1 to 30 (MDET…ATVP) and 50 to 72 (TATS…DQER). The segment covering 16-25 (EYSYQSQCSP) has biased composition (polar residues). Low complexity predominate over residues 50-60 (TATSCGSAASG). The PI3K/PI4K catalytic domain occupies 115–443 (DILPERISQG…VQTPPVIVET (329 aa)). A G-loop region spans residues 121-127 (ISQGSSG). ATP-binding positions include 122 to 128 (SQGSSGS) and Lys143. Residues 148–150 (EPY) form an important for substrate binding region. An important for interaction with membranes region spans residues 156–169 (KWTKWLQKLCCPCC). 4 S-palmitoyl cysteine lipidation sites follow: Cys165, Cys166, Cys168, and Cys169. An ATP-binding site is contributed by 252 to 255 (QIFV). The tract at residues 259–267 (KDADYWLRR) is important for interaction with membranes. The interval 296 to 304 (RNTDRGNDN) is catalytic loop. An activation loop region spans residues 334–354 (AIDNGLAFPLKHPDSWRAYPF). Asp336 contacts ATP. The tract at residues 349-358 (WRAYPFYWAW) is important for interaction with membranes.

This sequence belongs to the PI3/PI4-kinase family. Type II PI4K subfamily.

The protein resides in the golgi apparatus. It is found in the trans-Golgi network membrane. Its subcellular location is the membrane raft. The protein localises to the endosome. It localises to the endosome membrane. The protein resides in the cytoplasmic vesicle. It is found in the cell projection. Its subcellular location is the dendrite. The protein localises to the presynaptic cell membrane. It localises to the synapse. The protein resides in the synaptosome. It is found in the mitochondrion. Its subcellular location is the membrane. The protein localises to the cell membrane. It localises to the perikaryon. The protein resides in the neuron projection. It catalyses the reaction a 1,2-diacyl-sn-glycero-3-phospho-(1D-myo-inositol) + ATP = a 1,2-diacyl-sn-glycero-3-phospho-(1D-myo-inositol 4-phosphate) + ADP + H(+). Functionally, membrane-bound phosphatidylinositol-4 kinase (PI4-kinase) that catalyzes the phosphorylation of phosphatidylinositol (PI) to phosphatidylinositol 4-phosphate (PI4P), a lipid that plays important roles in endocytosis, Golgi function, protein sorting and membrane trafficking. Besides, phosphorylation of phosphatidylinositol (PI) to phosphatidylinositol 4-phosphate (PI4P) is the first committed step in the generation of phosphatidylinositol 4,5-bisphosphate (PIP2), a precursor of the second messenger inositol 1,4,5-trisphosphate (InsP3). This is Phosphatidylinositol 4-kinase type 2-alpha (pi4k2a) from Xenopus laevis (African clawed frog).